A 140-amino-acid chain; its full sequence is Small ribosomal subunit protein uS19 (140 aa).

Belongs to the universal ribosomal protein uS19 family.

Protein S19 forms a complex with S13 that binds strongly to the 16S ribosomal RNA. The sequence is that of Small ribosomal subunit protein uS19 from Sulfolobus acidocaldarius (strain ATCC 33909 / DSM 639 / JCM 8929 / NBRC 15157 / NCIMB 11770).